Consider the following 83-residue polypeptide: Alpha-neurotoxin NTX-3 (83 aa).

The signal sequence occupies residues 1–21; the sequence is MKTLLLTLLVVTIVCLDLGYT. Intrachain disulfides connect cysteine 24-cysteine 45, cysteine 38-cysteine 62, cysteine 64-cysteine 75, and cysteine 76-cysteine 81.

This sequence belongs to the three-finger toxin family. Short-chain subfamily. Type I alpha-neurotoxin sub-subfamily. Expressed by the venom gland.

The protein localises to the secreted. In terms of biological role, binds to muscle nicotinic acetylcholine receptor (nAChR) and inhibit acetylcholine from binding to the receptor, thereby impairing neuromuscular transmission. This chain is Alpha-neurotoxin NTX-3, found in Naja sputatrix (Malayan spitting cobra).